Consider the following 49-residue polypeptide: Glycolactin (49 aa).

It belongs to the pancreatic ribonuclease family. Glycosylated. As to expression, milk.

The protein localises to the secreted. Its function is as follows. Manifests poly C-specific RNase activity toward yeast tRNA, elicits a dose-dependent inhibition of cell-free translation, inhibits formation of superoxide ions in vitro and inhibits the hemagglutinating activities of soybean lectin and Ricinus communis agglutinin 120. Inhibits HIV-1 reverse transcriptase. In Bos taurus (Bovine), this protein is Glycolactin.